The primary structure comprises 72 residues: MSAIFNFQSLLTVILLLICTCAYIRSLAPSLLDKNKTGLLGIFWKCARIGERKSPYVAVCCVVMAFSILFVQ.

The signal sequence occupies residues 1–26; the sequence is MSAIFNFQSLLTVILLLICTCAYIRS. Topologically, residues 27-53 are extracellular; sequence LAPSLLDKNKTGLLGIFWKCARIGERK. N35 is a glycosylation site (N-linked (GlcNAc...) asparagine). The helical transmembrane segment at 54–71 threads the bilayer; the sequence is SPYVAVCCVVMAFSILFV. A topological domain (cytoplasmic) is located at residue Q72.

This sequence belongs to the KISH family.

The protein localises to the golgi apparatus membrane. Functionally, involved in the early part of the secretory pathway. The chain is Protein kish-A (TMEM167A) from Gallus gallus (Chicken).